We begin with the raw amino-acid sequence, 507 residues long: Protein DETOXIFICATION 39 (507 aa).

The next 12 membrane-spanning stretches (helical) occupy residues Val58–Ile78, Leu92–Met112, Ile141–Leu161, Ile178–Leu198, Phe209–Met229, Phe233–Phe253, Ala287–Leu307, Ser318–Val338, Trp359–Phe379, Phe403–Gly423, Val433–Phe453, and Gly459–Thr479.

It belongs to the multi antimicrobial extrusion (MATE) (TC 2.A.66.1) family.

It localises to the membrane. This is Protein DETOXIFICATION 39 from Arabidopsis thaliana (Mouse-ear cress).